The chain runs to 301 residues: NADH-cytochrome b5 reductase 3 (301 aa).

A lipid anchor (N-myristoyl glycine) is attached at Gly2. Residues 40 to 152 (DIKYPLRLID…RGPNGLLVYQ (113 aa)) enclose the FAD-binding FR-type domain. An N6-acetyllysine modification is found at Lys42. The residue at position 43 (Tyr43) is a Phosphotyrosine. Lys50 bears the N6-acetyllysine mark. The FAD site is built by Arg92, Pro93, Tyr94, Val109, Lys111, and Phe114. An N6-acetyllysine modification is found at Lys120. Residues Lys126, Met127, Ser128, and Thr185 each coordinate FAD.

This sequence belongs to the flavoprotein pyridine nucleotide cytochrome reductase family. As to quaternary structure, component of a complex composed of cytochrome b5, NADH-cytochrome b5 reductase (CYB5R3) and MTARC2. Interacts with MTLN; the interaction is required to maintain cellular lipid composition and leads to stimulation of mitochondrial respiratory complex I activity. Requires FAD as cofactor.

The protein localises to the endoplasmic reticulum membrane. Its subcellular location is the mitochondrion outer membrane. It catalyses the reaction 2 Fe(III)-[cytochrome b5] + NADH = 2 Fe(II)-[cytochrome b5] + NAD(+) + H(+). Catalyzes the reduction of two molecules of cytochrome b5 using NADH as the electron donor. The chain is NADH-cytochrome b5 reductase 3 from Mus musculus (Mouse).